A 440-amino-acid polypeptide reads, in one-letter code: 3-phosphoshikimate 1-carboxyvinyltransferase (440 aa).

The 3-phosphoshikimate site is built by lysine 26, serine 27, and arginine 31. Residue lysine 26 participates in phosphoenolpyruvate binding. Phosphoenolpyruvate is bound by residues glycine 100 and arginine 134. The 3-phosphoshikimate site is built by serine 180, serine 181, glutamine 182, serine 208, aspartate 323, asparagine 346, and lysine 350. Residue glutamine 182 coordinates phosphoenolpyruvate. The Proton acceptor role is filled by aspartate 323. Residues arginine 354, arginine 398, and lysine 423 each contribute to the phosphoenolpyruvate site.

This sequence belongs to the EPSP synthase family. In terms of assembly, monomer.

It is found in the cytoplasm. It catalyses the reaction 3-phosphoshikimate + phosphoenolpyruvate = 5-O-(1-carboxyvinyl)-3-phosphoshikimate + phosphate. It participates in metabolic intermediate biosynthesis; chorismate biosynthesis; chorismate from D-erythrose 4-phosphate and phosphoenolpyruvate: step 6/7. Its function is as follows. Catalyzes the transfer of the enolpyruvyl moiety of phosphoenolpyruvate (PEP) to the 5-hydroxyl of shikimate-3-phosphate (S3P) to produce enolpyruvyl shikimate-3-phosphate and inorganic phosphate. The polypeptide is 3-phosphoshikimate 1-carboxyvinyltransferase (Pasteurella multocida (strain Pm70)).